The following is a 232-amino-acid chain: Phosphatidylserine decarboxylase proenzyme (232 aa).

Ser190 (schiff-base intermediate with substrate; via pyruvic acid) is an active-site residue. Ser190 is modified (pyruvic acid (Ser); by autocatalysis).

The protein belongs to the phosphatidylserine decarboxylase family. PSD-A subfamily. As to quaternary structure, heterodimer of a large membrane-associated beta subunit and a small pyruvoyl-containing alpha subunit. Pyruvate serves as cofactor. In terms of processing, is synthesized initially as an inactive proenzyme. Formation of the active enzyme involves a self-maturation process in which the active site pyruvoyl group is generated from an internal serine residue via an autocatalytic post-translational modification. Two non-identical subunits are generated from the proenzyme in this reaction, and the pyruvate is formed at the N-terminus of the alpha chain, which is derived from the carboxyl end of the proenzyme. The post-translation cleavage follows an unusual pathway, termed non-hydrolytic serinolysis, in which the side chain hydroxyl group of the serine supplies its oxygen atom to form the C-terminus of the beta chain, while the remainder of the serine residue undergoes an oxidative deamination to produce ammonia and the pyruvoyl prosthetic group on the alpha chain.

It localises to the cell membrane. The catalysed reaction is a 1,2-diacyl-sn-glycero-3-phospho-L-serine + H(+) = a 1,2-diacyl-sn-glycero-3-phosphoethanolamine + CO2. It participates in phospholipid metabolism; phosphatidylethanolamine biosynthesis; phosphatidylethanolamine from CDP-diacylglycerol: step 2/2. Its function is as follows. Catalyzes the formation of phosphatidylethanolamine (PtdEtn) from phosphatidylserine (PtdSer). This is Phosphatidylserine decarboxylase proenzyme from Rhizobium rhizogenes (strain K84 / ATCC BAA-868) (Agrobacterium radiobacter).